Reading from the N-terminus, the 226-residue chain is ATP synthase F(0) complex subunit a (226 aa).

Transmembrane regions (helical) follow at residues 12 to 32 (PTMM…ILFP), 68 to 88 (WTLM…LGLL), 97 to 117 (QLSM…VTGF), 138 to 158 (IPML…ALAV), 164 to 184 (ITAG…LMSI), and 189 to 209 (ASIT…VALI).

The protein belongs to the ATPase A chain family. In terms of assembly, component of the ATP synthase complex composed at least of ATP5F1A/subunit alpha, ATP5F1B/subunit beta, ATP5MC1/subunit c (homooctomer), MT-ATP6/subunit a, MT-ATP8/subunit 8, ATP5ME/subunit e, ATP5MF/subunit f, ATP5MG/subunit g, ATP5MK/subunit k, ATP5MJ/subunit j, ATP5F1C/subunit gamma, ATP5F1D/subunit delta, ATP5F1E/subunit epsilon, ATP5PF/subunit F6, ATP5PB/subunit b, ATP5PD/subunit d, ATP5PO/subunit OSCP. ATP synthase complex consists of a soluble F(1) head domain (subunits alpha(3) and beta(3)) - the catalytic core - and a membrane F(0) domain - the membrane proton channel (subunits c, a, 8, e, f, g, k and j). These two domains are linked by a central stalk (subunits gamma, delta, and epsilon) rotating inside the F1 region and a stationary peripheral stalk (subunits F6, b, d, and OSCP). Interacts with DNAJC30; interaction is direct.

Its subcellular location is the mitochondrion inner membrane. The enzyme catalyses H(+)(in) = H(+)(out). Subunit a, of the mitochondrial membrane ATP synthase complex (F(1)F(0) ATP synthase or Complex V) that produces ATP from ADP in the presence of a proton gradient across the membrane which is generated by electron transport complexes of the respiratory chain. ATP synthase complex consist of a soluble F(1) head domain - the catalytic core - and a membrane F(1) domain - the membrane proton channel. These two domains are linked by a central stalk rotating inside the F(1) region and a stationary peripheral stalk. During catalysis, ATP synthesis in the catalytic domain of F(1) is coupled via a rotary mechanism of the central stalk subunits to proton translocation. With the subunit c (ATP5MC1), forms the proton-conducting channel in the F(0) domain, that contains two crucial half-channels (inlet and outlet) that facilitate proton movement from the mitochondrial intermembrane space (IMS) into the matrix. Protons are taken up via the inlet half-channel and released through the outlet half-channel, following a Grotthuss mechanism. The chain is ATP synthase F(0) complex subunit a from Dasypus novemcinctus (Nine-banded armadillo).